The following is a 467-amino-acid chain: MESLAQLPGIFLPLAGCVLALSLSALLAVGPIVRVTPTEVDICDLPAVREIHRVRGGYLKSEWYKSLTPPGVTSLLTLIEPTQYSEWRRLLAGPLSDTSLGKVEPMVTNHVHATIDRIASDLQSQGVSDLYKWWTYMATDVVSELSFGEPIGLLARPKETAWVMDYLDKVGIMHAWRTTFPFVFVLGRFMPVHPFKHAIQAIGLLGKWARRSIQQYRQHIQEQPESPKPTLFTKLFKADKFDDFQLTYLAGSYITAGSHTTAVTLLYLIYAICRDNEIRQKLLAEIRTLPENFRHDELRHLPYLNQVITETLRKYAVVSSALPRVVPAGGATLAGYYLPGGTTVSTQAYTLHRNEAIFPNPEKYKPNPKYSYLSMLSVWLIECRFDPSRWESPTQEMKDAYMPFGGASRMCIGNSLALMEIRLTTTLFLRRFPEVQMSRQNGMRDEDLAQEQYLIMAPRGHRLLVEA.

The first 28 residues, methionine 1–alanine 28, serve as a signal peptide directing secretion. Residue cysteine 411 coordinates heme.

This sequence belongs to the cytochrome P450 family. Heme is required as a cofactor.

The protein operates within secondary metabolite biosynthesis. Cytochrome P450 monooxygenase; part of the gene cluster that mediates the biosynthesis of azaphilones, a class of fungal metabolites characterized by a highly oxygenated pyrano-quinone bicyclic core and exhibiting a broad range of bioactivities. In the first step, the non-reducing polyketide synthase azaA forms the hexaketide precursor from successive condensations of five malonyl-CoA units, presumably with a simple acetyl-CoA starter unit. The reactive polyketide chain then undergoes a PT-mediated C2-C7 cyclization to afford the aromatic ring and is eventually released as an aldehyde through the R-domain. The putative ketoreductase azaE is proposed to catalyze the reduction of the terminal ketone resulting in the early culture product FK17-P2a. The monooxygenase azaH was demonstrated to be the only enzyme required to convert FK17-P2a to azanigerone E. AzaH first hydroxylates the benzaldehyde intermediate FK17-P2a at C4, which triggers the formation of the pyran-ring to afford azanigerone E. In parallel, the 2,4-dimethylhexanoyl chain is synthesized by the HR-PKS azaB and is proposed to be transferred to the C4-hydroxyl of azanigerone E by the acyltransferase azaD directly from the ACP domain of azaB. Alternatively, the 2,4-dimethyl-hexanoyl chain may be offloaded from the HR-PKS as a carboxylic acid and converted to an acyl-CoA by azaF. The resulting acyl-CoA molecule could then be taken up as a substrate by AzaD to form azanigerone B. To yield the carboxylic acid substituent in azanigerone A, the hydroxypropyl side chain of azanigerone B would need to undergo a C-C oxidative cleavage catalyzed by cytochrome P450 AzaI. AzaI is proposed to act on a vicinal diol that leads to a C-C bond scission either through an alkoxyradical intermediate or a peroxy complex. In the biosynthesis of azanigerone A, azanigerone B first undergoes hydroxylation at C10, possibly catalyzed by one of the two FAD-dependent monooxygenases encoded in the cluster, azaG or azaL, resulting in the vicinal diol azanigerone C. Oxidative cleavage of azanigerone C by azaI would yield the corresponding aldehyde derivative of azanigerone A. Finally, the dehydrogenase azaJ is proposed to convert the aldehyde functional group into the carboxylic acid, completing the conversion from azanigerone B to azanigerone A. Alternatively, the oxidation of aldehyde to carboxylic acid may be catalyzed by the same P450 enzyme azaI via consecutive oxidation or by endogenous alcohol dehydrogenase. The sequence is that of Cytochrome P450 monooxygenase azaI from Aspergillus niger (strain ATCC 1015 / CBS 113.46 / FGSC A1144 / LSHB Ac4 / NCTC 3858a / NRRL 328 / USDA 3528.7).